The following is a 403-amino-acid chain: Interferon-induced protein with tetratricopeptide repeats 3 (403 aa).

TPR repeat units follow at residues 94 to 127 (LVTW…CQKF), 136 to 169 (PELE…KPKD), 172 to 206 (CSSG…NPQN), and 241 to 274 (TDVL…TVNN).

The protein belongs to the IFIT family. In terms of assembly, component of an interferon-dependent multiprotein complex, at least composed of IFIT1, IFIT2 and IFIT3. Interacts with IFIT1 and IFIT2. Interacts (via N-terminus) with MAVS, TBK1, TRAF6 and RIGI. Interacts with COPS5.

Its subcellular location is the cytoplasm. The protein resides in the mitochondrion. Its function is as follows. IFN-induced antiviral protein which acts as an inhibitor of cellular as well as viral processes, cell migration, proliferation, signaling, and viral replication. Enhances MAVS-mediated host antiviral responses by serving as an adapter bridging TBK1 to MAVS which leads to the activation of TBK1 and phosphorylation of IRF3 and phosphorylated IRF3 translocates into nucleus to promote antiviral gene transcription. Exhibits an antiproliferative activity via the up-regulation of cell cycle negative regulators CDKN1A/p21 and CDKN1B/p27. Normally, CDKN1B/p27 turnover is regulated by COPS5, which binds CDKN1B/p27 in the nucleus and exports it to the cytoplasm for ubiquitin-dependent degradation. IFIT3 sequesters COPS5 in the cytoplasm, thereby increasing nuclear CDKN1B/p27 protein levels. Up-regulates CDKN1A/p21 by down-regulating MYC, a repressor of CDKN1A/p21. Can negatively regulate the apoptotic effects of IFIT2. This is Interferon-induced protein with tetratricopeptide repeats 3 (Ifit3) from Mus musculus (Mouse).